Here is a 232-residue protein sequence, read N- to C-terminus: Ubiquinone biosynthesis O-methyltransferase (232 aa).

S-adenosyl-L-methionine-binding residues include R36, G55, D76, and L120.

This sequence belongs to the methyltransferase superfamily. UbiG/COQ3 family.

It carries out the reaction a 3-demethylubiquinol + S-adenosyl-L-methionine = a ubiquinol + S-adenosyl-L-homocysteine + H(+). The catalysed reaction is a 3-(all-trans-polyprenyl)benzene-1,2-diol + S-adenosyl-L-methionine = a 2-methoxy-6-(all-trans-polyprenyl)phenol + S-adenosyl-L-homocysteine + H(+). It functions in the pathway cofactor biosynthesis; ubiquinone biosynthesis. O-methyltransferase that catalyzes the 2 O-methylation steps in the ubiquinone biosynthetic pathway. The chain is Ubiquinone biosynthesis O-methyltransferase from Dechloromonas aromatica (strain RCB).